A 68-amino-acid chain; its full sequence is DNA-directed RNA polymerase subunit omega (68 aa).

The protein belongs to the RNA polymerase subunit omega family. In terms of assembly, the RNAP catalytic core consists of 2 alpha, 1 beta, 1 beta' and 1 omega subunit. When a sigma factor is associated with the core the holoenzyme is formed, which can initiate transcription.

It carries out the reaction RNA(n) + a ribonucleoside 5'-triphosphate = RNA(n+1) + diphosphate. In terms of biological role, promotes RNA polymerase assembly. Latches the N- and C-terminal regions of the beta' subunit thereby facilitating its interaction with the beta and alpha subunits. This is DNA-directed RNA polymerase subunit omega from Nitrosospira multiformis (strain ATCC 25196 / NCIMB 11849 / C 71).